Here is a 293-residue protein sequence, read N- to C-terminus: Movement protein BC1 (293 aa).

This sequence belongs to the begomovirus movement protein BC1 family. Binds to dimeric supercoiled plasmid DNA. Phosphorylated.

The protein resides in the host cell membrane. It localises to the host microsome membrane. Its subcellular location is the host endoplasmic reticulum membrane. In terms of biological role, transports viral genome to neighboring plant cells directly through plasmosdesmata, without any budding. The movement protein allows efficient cell to cell propagation, by bypassing the host cell wall barrier. Begomovirus genome is shuttled out of nucleus by Nuclear shuttle protein (NSP) and the movement protein transports the DNA-NSP complex to cell plasmodesmata and facilitates further movement across the cell wall. The chain is Movement protein BC1 from Potato yellow mosaic virus (isolate Venezuela) (PYMV).